A 289-amino-acid chain; its full sequence is Aquaporin-2 (289 aa).

The disordered stretch occupies residues methionine 1–arginine 36. Topologically, residues methionine 1 to histidine 47 are cytoplasmic. A helical membrane pass occupies residues phenylalanine 48 to isoleucine 68. At cysteine 69–leucine 90 the chain is on the extracellular side. Residues isoleucine 91–valine 111 traverse the membrane as a helical segment. The Cytoplasmic segment spans residues serine 112–cysteine 135. Positions asparagine 117–alanine 119 match the NPA 1 motif. A helical membrane pass occupies residues valine 136–methionine 156. Residues threonine 157 to arginine 175 are Extracellular-facing. Residues glycine 176–valine 196 traverse the membrane as a helical segment. The Cytoplasmic portion of the chain corresponds to glutamate 197–asparagine 202. Residues phenylalanine 203–tyrosine 223 traverse the membrane as a helical segment. Residues threonine 224–histidine 247 are Extracellular-facing. Residues asparagine 229–alanine 231 carry the NPA 2 motif. Residues tryptophan 248 to leucine 268 traverse the membrane as a helical segment. At glutamine 269–aspartate 289 the chain is on the cytoplasmic side.

This sequence belongs to the MIP/aquaporin (TC 1.A.8) family.

The protein localises to the endoplasmic reticulum membrane. The protein resides in the cell membrane. Its function is as follows. Water channel required to facilitate the transport of water across membranes. Involved in freeze tolerance, osmotolerance and cell flocculation in liquid cultures. Is non-functional in most laboratory strains. The chain is Aquaporin-2 (AQY2) from Saccharomyces cerevisiae (Baker's yeast).